The primary structure comprises 352 residues: Alanine racemase (352 aa).

Lysine 34 (proton acceptor; specific for D-alanine) is an active-site residue. Lysine 34 carries the N6-(pyridoxal phosphate)lysine modification. Substrate is bound at residue arginine 126. The Proton acceptor; specific for L-alanine role is filled by tyrosine 248. Methionine 296 is a substrate binding site.

This sequence belongs to the alanine racemase family. Requires pyridoxal 5'-phosphate as cofactor.

The enzyme catalyses L-alanine = D-alanine. Its pathway is amino-acid biosynthesis; D-alanine biosynthesis; D-alanine from L-alanine: step 1/1. Functionally, catalyzes the interconversion of L-alanine and D-alanine. May also act on other amino acids. This is Alanine racemase (alr) from Deinococcus deserti (strain DSM 17065 / CIP 109153 / LMG 22923 / VCD115).